Consider the following 75-residue polypeptide: Small ribosomal subunit protein eS28 (75 aa).

It belongs to the eukaryotic ribosomal protein eS28 family.

This chain is Small ribosomal subunit protein eS28, found in Methanococcus aeolicus (strain ATCC BAA-1280 / DSM 17508 / OCM 812 / Nankai-3).